The sequence spans 331 residues: Adenosine deaminase (331 aa).

Positions 12 and 14 each coordinate Zn(2+). Positions 14, 16, and 170 each coordinate substrate. His-197 serves as a coordination point for Zn(2+). Glu-200 functions as the Proton donor in the catalytic mechanism. Position 278 (Asp-278) interacts with Zn(2+). Asp-279 lines the substrate pocket.

This sequence belongs to the metallo-dependent hydrolases superfamily. Adenosine and AMP deaminases family. Adenosine deaminase subfamily. It depends on Zn(2+) as a cofactor.

It catalyses the reaction adenosine + H2O + H(+) = inosine + NH4(+). The catalysed reaction is 2'-deoxyadenosine + H2O + H(+) = 2'-deoxyinosine + NH4(+). Catalyzes the hydrolytic deamination of adenosine and 2-deoxyadenosine. This is Adenosine deaminase from Shewanella oneidensis (strain ATCC 700550 / JCM 31522 / CIP 106686 / LMG 19005 / NCIMB 14063 / MR-1).